The primary structure comprises 266 residues: Phosphate import ATP-binding protein PstB (266 aa).

Residues 15 to 261 (VQKSVVNKLN…PKNKQTEDYI (247 aa)) form the ABC transporter domain. 50-57 (GPSGCGKS) lines the ATP pocket.

This sequence belongs to the ABC transporter superfamily. Phosphate importer (TC 3.A.1.7) family. The complex is composed of two ATP-binding proteins (PstB), two transmembrane proteins (PstC and PstA) and a solute-binding protein (PstS).

It is found in the cell inner membrane. It catalyses the reaction phosphate(out) + ATP + H2O = ADP + 2 phosphate(in) + H(+). Functionally, part of the ABC transporter complex PstSACB involved in phosphate import. Responsible for energy coupling to the transport system. The chain is Phosphate import ATP-binding protein PstB from Nitrosomonas europaea (strain ATCC 19718 / CIP 103999 / KCTC 2705 / NBRC 14298).